The primary structure comprises 241 residues: Leucyl/phenylalanyl-tRNA--protein transferase (241 aa).

Belongs to the L/F-transferase family.

Its subcellular location is the cytoplasm. The catalysed reaction is N-terminal L-lysyl-[protein] + L-leucyl-tRNA(Leu) = N-terminal L-leucyl-L-lysyl-[protein] + tRNA(Leu) + H(+). It carries out the reaction N-terminal L-arginyl-[protein] + L-leucyl-tRNA(Leu) = N-terminal L-leucyl-L-arginyl-[protein] + tRNA(Leu) + H(+). It catalyses the reaction L-phenylalanyl-tRNA(Phe) + an N-terminal L-alpha-aminoacyl-[protein] = an N-terminal L-phenylalanyl-L-alpha-aminoacyl-[protein] + tRNA(Phe). Functionally, functions in the N-end rule pathway of protein degradation where it conjugates Leu, Phe and, less efficiently, Met from aminoacyl-tRNAs to the N-termini of proteins containing an N-terminal arginine or lysine. This is Leucyl/phenylalanyl-tRNA--protein transferase from Neisseria meningitidis serogroup C (strain 053442).